We begin with the raw amino-acid sequence, 430 residues long: Zinc finger and SCAN domain-containing protein 4 (430 aa).

The tract at residues methionine 1–glutamate 38 is disordered. Residues arginine 44 to serine 126 form the SCAN box domain. Residues glycine 164–threonine 185 show a composition bias toward polar residues. Disordered regions lie at residues glycine 164 to glycine 196, tyrosine 224 to glycine 257, and glutamate 281 to glutamate 300. 4 C2H2-type zinc fingers span residues tyrosine 309–histidine 331, phenylalanine 337–histidine 359, phenylalanine 365–histidine 387, and tyrosine 393–histidine 415.

It localises to the nucleus. The protein localises to the chromosome. The protein resides in the telomere. Embryonic stem (ES) cell-specific transcription factor required to regulate ES cell pluripotency. Binds telomeres and plays a key role in genomic stability in ES cells by regulating telomere elongation. Acts as an activator of spontaneous telomere sister chromatid exchange (T-SCE) and telomere elongation in undifferentiated ES cells. The sequence is that of Zinc finger and SCAN domain-containing protein 4 (ZSCAN4) from Ailuropoda melanoleuca (Giant panda).